The following is a 231-amino-acid chain: Ribose-5-phosphate isomerase A (231 aa).

Residues T28–T31, D83–D86, and K96–G99 contribute to the substrate site. Residue E105 is the Proton acceptor of the active site. Position 123 (K123) interacts with substrate.

It belongs to the ribose 5-phosphate isomerase family. Homodimer.

The enzyme catalyses aldehydo-D-ribose 5-phosphate = D-ribulose 5-phosphate. It functions in the pathway carbohydrate degradation; pentose phosphate pathway; D-ribose 5-phosphate from D-ribulose 5-phosphate (non-oxidative stage): step 1/1. Functionally, catalyzes the reversible conversion of ribose-5-phosphate to ribulose 5-phosphate. The protein is Ribose-5-phosphate isomerase A of Parvibaculum lavamentivorans (strain DS-1 / DSM 13023 / NCIMB 13966).